The following is a 143-amino-acid chain: Polyadenylate-binding protein-interacting protein 2 (143 aa).

Positions 11-21 match the PAM2-like motif; that stretch reads TLNPNAPVFDP.

The sequence is that of Polyadenylate-binding protein-interacting protein 2 (CID2) from Arabidopsis thaliana (Mouse-ear cress).